The sequence spans 103 residues: Histone H4 (103 aa).

A compositionally biased stretch (gly residues) spans 1–14; that stretch reads MSGRGKGGKGLGKG. The segment at 1 to 20 is disordered; it reads MSGRGKGGKGLGKGGAKRHR. Residues 17 to 21 mediate DNA binding; that stretch reads KRHRK.

It belongs to the histone H4 family. The nucleosome is a histone octamer containing two molecules each of H2A, H2B, H3 and H4 assembled in one H3-H4 heterotetramer and two H2A-H2B heterodimers. The octamer wraps approximately 147 bp of DNA.

Its subcellular location is the nucleus. The protein localises to the chromosome. Its function is as follows. Core component of nucleosome. Nucleosomes wrap and compact DNA into chromatin, limiting DNA accessibility to the cellular machineries which require DNA as a template. Histones thereby play a central role in transcription regulation, DNA repair, DNA replication and chromosomal stability. DNA accessibility is regulated via a complex set of post-translational modifications of histones, also called histone code, and nucleosome remodeling. The chain is Histone H4 from Eimeria tenella (Coccidian parasite).